The primary structure comprises 138 residues: Small ribosomal subunit protein uS11c (138 aa).

The segment at 1-22 (MAKPIPKIGSRKNARSGSRKHL) is disordered. Positions 9–22 (GSRKNARSGSRKHL) are enriched in basic residues.

Belongs to the universal ribosomal protein uS11 family. As to quaternary structure, part of the 30S ribosomal subunit.

The protein resides in the plastid. It localises to the chloroplast. This is Small ribosomal subunit protein uS11c from Lotus japonicus (Lotus corniculatus var. japonicus).